A 225-amino-acid polypeptide reads, in one-letter code: Ribulose-phosphate 3-epimerase (225 aa).

A substrate-binding site is contributed by Ser-10. Residues His-35, Asp-37, and His-68 each coordinate a divalent metal cation. Asp-37 acts as the Proton acceptor in catalysis. Substrate contacts are provided by residues His-68, 144–147, and 175–177; these read GFGG and DGG. A divalent metal cation is bound at residue Asp-175. The active-site Proton donor is the Asp-175.

This sequence belongs to the ribulose-phosphate 3-epimerase family. A divalent metal cation serves as cofactor.

It catalyses the reaction D-ribulose 5-phosphate = D-xylulose 5-phosphate. It functions in the pathway carbohydrate degradation. Catalyzes the reversible epimerization of D-ribulose 5-phosphate to D-xylulose 5-phosphate. The polypeptide is Ribulose-phosphate 3-epimerase (Rhodospirillum rubrum).